The primary structure comprises 225 residues: 2-amino-5-formylamino-6-ribosylaminopyrimidin-4(3H)-one 5'-monophosphate deformylase (225 aa).

Glu-28, His-30, Asp-39, and His-107 together coordinate Fe cation.

Belongs to the creatininase superfamily. FAPy deformylase family. As to quaternary structure, homodimer. Fe(2+) is required as a cofactor. The cofactor is Zn(2+).

The enzyme catalyses 2-amino-5-formylamino-6-(5-phospho-D-ribosylamino)pyrimidin-4(3H)-one + H2O = 2,5-diamino-6-(1-D-ribosylamino)pyrimidin-4(3H)-one 5'-phosphate + formate + H(+). Its pathway is cofactor biosynthesis; coenzyme F420 biosynthesis. It participates in cofactor biosynthesis; riboflavin biosynthesis. Functionally, catalyzes the hydrolysis of the formamide of 2-amino-5-formylamino-6-ribosylamino-4(3H)-pyrimidinone 5'-monophosphate (FAPy) to form 2,5-diamino-6-ribosylamino-4(3H)-pyrimidinone 5'-phosphate (APy). The protein is 2-amino-5-formylamino-6-ribosylaminopyrimidin-4(3H)-one 5'-monophosphate deformylase of Methanocaldococcus sp. (strain FS406-22).